A 149-amino-acid polypeptide reads, in one-letter code: D-aminoacyl-tRNA deacylase (149 aa).

Positions 137-138 (GP) match the Gly-cisPro motif, important for rejection of L-amino acids motif.

Belongs to the DTD family. In terms of assembly, homodimer.

Its subcellular location is the cytoplasm. It catalyses the reaction glycyl-tRNA(Ala) + H2O = tRNA(Ala) + glycine + H(+). The enzyme catalyses a D-aminoacyl-tRNA + H2O = a tRNA + a D-alpha-amino acid + H(+). Its function is as follows. An aminoacyl-tRNA editing enzyme that deacylates mischarged D-aminoacyl-tRNAs. Also deacylates mischarged glycyl-tRNA(Ala), protecting cells against glycine mischarging by AlaRS. Acts via tRNA-based rather than protein-based catalysis; rejects L-amino acids rather than detecting D-amino acids in the active site. By recycling D-aminoacyl-tRNA to D-amino acids and free tRNA molecules, this enzyme counteracts the toxicity associated with the formation of D-aminoacyl-tRNA entities in vivo and helps enforce protein L-homochirality. In Clostridium acetobutylicum (strain ATCC 824 / DSM 792 / JCM 1419 / IAM 19013 / LMG 5710 / NBRC 13948 / NRRL B-527 / VKM B-1787 / 2291 / W), this protein is D-aminoacyl-tRNA deacylase.